The chain runs to 501 residues: GTPase Obg (501 aa).

Residues 2–159 (NRFIDRVVLH…HDLILELKSM (158 aa)) form the Obg domain. An OBG-type G domain is found at 160–341 (ADVGLVGFPS…LKYKLLEIVQ (182 aa)). Residues 166-173 (GFPSAGKS), 191-195 (FTTLQ), 212-215 (DVPG), 292-295 (NKAD), and 322-324 (SAV) contribute to the GTP site. Mg(2+) is bound by residues Ser173 and Thr193. The OCT domain maps to 362–442 (VDHRTKGQFQ…IGGISFEWEP (81 aa)).

This sequence belongs to the TRAFAC class OBG-HflX-like GTPase superfamily. OBG GTPase family. As to quaternary structure, monomer. Mg(2+) serves as cofactor.

Its subcellular location is the cytoplasm. Functionally, an essential GTPase which binds GTP, GDP and possibly (p)ppGpp with moderate affinity, with high nucleotide exchange rates and a fairly low GTP hydrolysis rate. Plays a role in control of the cell cycle, stress response, ribosome biogenesis and in those bacteria that undergo differentiation, in morphogenesis control. The sequence is that of GTPase Obg from Corynebacterium glutamicum (strain R).